The chain runs to 445 residues: Phosphoglucosamine mutase (445 aa).

The Phosphoserine intermediate role is filled by Ser102. Mg(2+) is bound by residues Ser102, Asp241, Asp243, and Asp245. Ser102 carries the phosphoserine modification.

It belongs to the phosphohexose mutase family. It depends on Mg(2+) as a cofactor. Activated by phosphorylation.

It carries out the reaction alpha-D-glucosamine 1-phosphate = D-glucosamine 6-phosphate. Its function is as follows. Catalyzes the conversion of glucosamine-6-phosphate to glucosamine-1-phosphate. The polypeptide is Phosphoglucosamine mutase (Haemophilus influenzae (strain ATCC 51907 / DSM 11121 / KW20 / Rd)).